Consider the following 302-residue polypeptide: Glycine--tRNA ligase alpha subunit (302 aa).

It belongs to the class-II aminoacyl-tRNA synthetase family. In terms of assembly, tetramer of two alpha and two beta subunits.

It is found in the cytoplasm. The catalysed reaction is tRNA(Gly) + glycine + ATP = glycyl-tRNA(Gly) + AMP + diphosphate. This is Glycine--tRNA ligase alpha subunit from Haemophilus influenzae (strain 86-028NP).